We begin with the raw amino-acid sequence, 133 residues long: Osteocrin (133 aa).

Positions 1–27 (MLDWRLASAHFILAVTLTLWSSGKVLS) are cleaved as a signal peptide. Arg-132 is modified (arginine amide).

This sequence belongs to the Osteocrin family. As to quaternary structure, interacts with NPR3. As to expression, enriched in neocortical regions of the developing cerebral cortex. Not expressed in other compartments of the neocortical wall or in brain regions such as the hippocampus, striatum, mediodorsal nucleus of the thalamus and cerebellum. Also expressed in bone. In developing neonatal rib bone, present at high level in osteoblasts on bone-forming surfaces, in newly incorporated osteocytes and in some late hypertrophic chondrocytes (at protein level). In adult bone, localizes specifically to osteoblasts and young osteocytes at bone-forming sites (at protein level).

It localises to the secreted. Its function is as follows. Hormone that acts as a regulator of dendritic growth in the developing cerebral cortex in response to sensory experience. Induced in the brain following membrane depolarization and inhibits dendritic branching in neurons of the developing cortex. Probably acts by binding to natriuretic peptide receptor NPR3/NPR-C, thereby preventing binding between NPR3/NPR-C and natriuretic peptides, leading to increase cGMP production. The polypeptide is Osteocrin (Homo sapiens (Human)).